The chain runs to 443 residues: Thymidine phosphorylase (443 aa).

This sequence belongs to the thymidine/pyrimidine-nucleoside phosphorylase family. Homodimer.

The enzyme catalyses thymidine + phosphate = 2-deoxy-alpha-D-ribose 1-phosphate + thymine. It participates in pyrimidine metabolism; dTMP biosynthesis via salvage pathway; dTMP from thymine: step 1/2. In terms of biological role, the enzymes which catalyze the reversible phosphorolysis of pyrimidine nucleosides are involved in the degradation of these compounds and in their utilization as carbon and energy sources, or in the rescue of pyrimidine bases for nucleotide synthesis. The protein is Thymidine phosphorylase of Shewanella halifaxensis (strain HAW-EB4).